Here is a 207-residue protein sequence, read N- to C-terminus: MSCTIEKILTDAKTLLERLREHDAAAESLVDQSAALHRRVAAMREAGTALPDQYQEDASDMKDMSKYKPHILLSQENTQIRDLQQENRELWISLEEHQDALELIMSKYRKQMLQLMVAKKAVDAEPVLKAHQSHSAEIESQIDRICEMGEVMRKAVQVDDDQFCKIQEKLAQLELENKELRELLSISSESLQARKENSMDTASQAIK.

2 coiled-coil regions span residues 70–102 (HILL…DALE) and 162–193 (QFCK…SLQA).

This sequence belongs to the SIKE family. In terms of assembly, interacts with IKBKE and TBK1 via its coiled coil region. Interaction with TBK1 is disrupted upon viral infection or TLR3 stimulation. Interacts with CDC42BPB. Interacts with SIKE1 which mediates association with the STRIPAK core complex composed of PP2A catalytic and scaffolding subunits, the striatins (PP2A regulatory subunits), the striatin-associated proteins MOB4, STRIP1 and STRIP2, PDCD10 and members of the STE20 kinases, such as STK24 and STK26. As to expression, widely expressed. Expressed in brain, heart, skeletal muscle, colon, thymus, spleen, kidney, liver, small intestine, placenta, lung and leukocytes. Present in all cell lines tested (at protein level).

Its subcellular location is the cytoplasm. In terms of biological role, physiological suppressor of IKK-epsilon and TBK1 that plays an inhibitory role in virus- and TLR3-triggered IRF3. Inhibits TLR3-mediated activation of interferon-stimulated response elements (ISRE) and the IFN-beta promoter. May act by disrupting the interactions of IKBKE or TBK1 with TICAM1/TRIF, IRF3 and RIGI. Does not inhibit NF-kappa-B activation pathways. Associates with the striatin-interacting phosphatase and kinase (STRIPAK) core complex, forming the extended (SIKE1:SLMAP)STRIPAK complex. The (SIKE1:SLMAP)STRIPAK complex dephosphorylates STK3 leading to the inhibition of Hippo signaling and the control of cell growth. The polypeptide is Suppressor of IKBKE 1 (Homo sapiens (Human)).